Here is a 109-residue protein sequence, read N- to C-terminus: Ubiquitin-related modifier 1 homolog (109 aa).

At Gly-109 the chain carries 1-thioglycine. Residue Gly-109 forms a Glycyl lysine isopeptide (Gly-Lys) (interchain with K-? in acceptor proteins) linkage.

This sequence belongs to the URM1 family. C-terminal thiocarboxylation occurs in 2 steps, it is first acyl-adenylated (-COAMP) via the hesA/moeB/thiF part of the MOCS3 homolog, then thiocarboxylated (-COSH) via the rhodanese domain of the MOCS3 homolog.

The protein localises to the cytoplasm. It participates in tRNA modification; 5-methoxycarbonylmethyl-2-thiouridine-tRNA biosynthesis. Its function is as follows. Acts as a sulfur carrier required for 2-thiolation of mcm(5)S(2)U at tRNA wobble positions of cytosolic tRNA(Lys), tRNA(Glu) and tRNA(Gln). Serves as sulfur donor in tRNA 2-thiolation reaction by being thiocarboxylated (-COSH) at its C-terminus by MOCS3. The sulfur is then transferred to tRNA to form 2-thiolation of mcm(5)S(2)U. Also acts as a ubiquitin-like protein (UBL) that is covalently conjugated via an isopeptide bond to lysine residues of target proteins. The thiocarboxylated form serves as substrate for conjugation and oxidative stress specifically induces the formation of UBL-protein conjugates. This Culex quinquefasciatus (Southern house mosquito) protein is Ubiquitin-related modifier 1 homolog.